The following is a 24-amino-acid chain: Grammistin Gs G (24 aa).

It belongs to the grammistin family. Group 1 subfamily. As to quaternary structure, exists as aggregates of 3-4 molecules. As to expression, expressed by the skin glands.

Its subcellular location is the secreted. In terms of biological role, thanks to its abundant amphiphilic alpha-helices, it may integrate into membrane phospholipids, leading to lysis of the membrane. Its high hemolytic activity is inhibited by phospholipids, but not by cholesterol. Has antibacterial activity with a broad spectrum against various species of bacteria including both Gram-positive and Gram-negative groups. Also has high ichthyotoxic activity. The chain is Grammistin Gs G from Grammistes sexlineatus (Goldenstriped soapfish).